The sequence spans 323 residues: MYHNSSQKRHWTFSSEEQLARLRADANRKFRCKAVANGKVLPNDPVFLEPHEEMTLCKYYEKRLLEFCSVFKPAMPRSVVGTACMYFKRFYLNNSVMEYHPRIIMLTCAFLACKVDEFNVSSPQFVGNLRESPLGQEKALEQILEYELLLIQQLNFHLIVHNPYRPFEGFLIDLKTRYPILENPEILRKTADDFLNRIALTDAYLLYTPSQIALTAILSSASRAGITMESYLSESLMLRENRTCLSQLLDIMKSMRNLVKKYEPPRSEEVAVLKQKLERCHSAELALNVITKKRKGYEDDDYVPKKSKHEEEEWTDDDLVESL.

S5 is subject to Phosphoserine; by CDK8. Position 132 is a phosphoserine (S132). The tract at residues 299–323 (DDDYVPKKSKHEEEEWTDDDLVESL) is disordered. Over residues 302–311 (YVPKKSKHEE) the composition is skewed to basic and acidic residues. Residues 312 to 323 (EEWTDDDLVESL) show a composition bias toward acidic residues. T315 carries the phosphothreonine modification. A Phosphoserine modification is found at S322.

The protein belongs to the cyclin family. Cyclin C subfamily. In terms of assembly, associates primarily with CDK7 and MAT1 to form the CAK complex. CAK can further associate with the core-TFIIH to form the TFIIH basal transcription factor.

It localises to the nucleus. Its function is as follows. Regulates CDK7, the catalytic subunit of the CDK-activating kinase (CAK) enzymatic complex. CAK activates the cyclin-associated kinases CDK1, CDK2, CDK4 and CDK6 by threonine phosphorylation. CAK complexed to the core-TFIIH basal transcription factor activates RNA polymerase II by serine phosphorylation of the repetitive C-terminal domain (CTD) of its large subunit (POLR2A), allowing its escape from the promoter and elongation of the transcripts. Involved in cell cycle control and in RNA transcription by RNA polymerase II. Its expression and activity are constant throughout the cell cycle. The sequence is that of Cyclin-H (CCNH) from Macaca fascicularis (Crab-eating macaque).